Consider the following 366-residue polypeptide: Chorismate synthase (366 aa).

The NADP(+) site is built by R48 and R54. FMN contacts are provided by residues R125–S127, N238–A239, G278, K293–S297, and R319.

This sequence belongs to the chorismate synthase family. In terms of assembly, homotetramer. FMNH2 serves as cofactor.

The enzyme catalyses 5-O-(1-carboxyvinyl)-3-phosphoshikimate = chorismate + phosphate. The protein operates within metabolic intermediate biosynthesis; chorismate biosynthesis; chorismate from D-erythrose 4-phosphate and phosphoenolpyruvate: step 7/7. Functionally, catalyzes the anti-1,4-elimination of the C-3 phosphate and the C-6 proR hydrogen from 5-enolpyruvylshikimate-3-phosphate (EPSP) to yield chorismate, which is the branch point compound that serves as the starting substrate for the three terminal pathways of aromatic amino acid biosynthesis. This reaction introduces a second double bond into the aromatic ring system. The protein is Chorismate synthase of Paraburkholderia phymatum (strain DSM 17167 / CIP 108236 / LMG 21445 / STM815) (Burkholderia phymatum).